An 853-amino-acid chain; its full sequence is Guanine nucleotide exchange protein smcr8a (853 aa).

A uDENN FLCN/SMCR8-type domain is found at T47 to N219. Disordered stretches follow at residues P272–S298 and L418–S454. Residues D280–S298 show a composition bias toward polar residues. The 438-residue stretch at R316–T753 folds into the cDENN FLCN/SMCR8-type domain. Positions G421–S432 are enriched in low complexity. Residues T433–S454 are compositionally biased toward polar residues. A dDENN FLCN/SMCR8-type domain is found at F762–K826.

This sequence belongs to the SMCR8 family. As to quaternary structure, component of the C9orf72-SMCR8 complex. The C9orf72-SMCR8 complex associates with the ATG1/ULK1 kinase complex.

The protein resides in the cytoplasm. Its subcellular location is the nucleus. Component of the C9orf72-SMCR8 complex, a complex that has guanine nucleotide exchange factor (GEF) activity and regulates autophagy. In the complex, C9orf72 and SMCR8 probably constitute the catalytic subunits that promote the exchange of GDP to GTP, converting inactive GDP-bound RAB8A and RAB39B into their active GTP-bound form, thereby promoting autophagosome maturation. The C9orf72-SMCR8 complex also acts as a negative regulator of autophagy initiation by interacting with the ATG1/ULK1 kinase complex and inhibiting its protein kinase activity. In Danio rerio (Zebrafish), this protein is Guanine nucleotide exchange protein smcr8a (smcr8a).